Here is a 227-residue protein sequence, read N- to C-terminus: UPF0173 metal-dependent hydrolase Oter_4201 (227 aa).

This sequence belongs to the UPF0173 family.

The sequence is that of UPF0173 metal-dependent hydrolase Oter_4201 from Opitutus terrae (strain DSM 11246 / JCM 15787 / PB90-1).